A 114-amino-acid chain; its full sequence is T cell receptor beta variable 3-1 (114 aa).

A signal peptide spans 1-21 (MGCRLLCCVVFCLLQAGPLDT). The Ig-like domain occupies 22-114 (AVSQTPKYLV…SAVYFCASSQ (93 aa)). Cysteines 42 and 110 form a disulfide. Asn-76 carries N-linked (GlcNAc...) asparagine glycosylation.

Alpha-beta TR is a heterodimer composed of an alpha and beta chain; disulfide-linked. The alpha-beta TR is associated with the transmembrane signaling CD3 coreceptor proteins to form the TR-CD3 (TcR or TCR). The assembly of alpha-beta TR heterodimers with CD3 occurs in the endoplasmic reticulum where a single alpha-beta TR heterodimer associates with one CD3D-CD3E heterodimer, one CD3G-CD3E heterodimer and one CD247 homodimer forming a stable octameric structure. CD3D-CD3E and CD3G-CD3E heterodimers preferentially associate with TR alpha and TR beta chains, respectively. The association of the CD247 homodimer is the last step of TcR assembly in the endoplasmic reticulum and is required for transport to the cell surface.

The protein localises to the cell membrane. V region of the variable domain of T cell receptor (TR) beta chain that participates in the antigen recognition. Alpha-beta T cell receptors are antigen specific receptors which are essential to the immune response and are present on the cell surface of T lymphocytes. Recognize peptide-major histocompatibility (MH) (pMH) complexes that are displayed by antigen presenting cells (APC), a prerequisite for efficient T cell adaptive immunity against pathogens. Binding of alpha-beta TR to pMH complex initiates TR-CD3 clustering on the cell surface and intracellular activation of LCK that phosphorylates the ITAM motifs of CD3G, CD3D, CD3E and CD247 enabling the recruitment of ZAP70. In turn ZAP70 phosphorylates LAT, which recruits numerous signaling molecules to form the LAT signalosome. The LAT signalosome propagates signal branching to three major signaling pathways, the calcium, the mitogen-activated protein kinase (MAPK) kinase and the nuclear factor NF-kappa-B (NF-kB) pathways, leading to the mobilization of transcription factors that are critical for gene expression and essential for T cell growth and differentiation. The T cell repertoire is generated in the thymus, by V-(D)-J rearrangement. This repertoire is then shaped by intrathymic selection events to generate a peripheral T cell pool of self-MH restricted, non-autoaggressive T cells. Post-thymic interaction of alpha-beta TR with the pMH complexes shapes TR structural and functional avidity. This is T cell receptor beta variable 3-1 from Homo sapiens (Human).